Reading from the N-terminus, the 264-residue chain is Thiazole synthase (264 aa).

The Schiff-base intermediate with DXP role is filled by Lys-106. Residues Gly-167, 193 to 194 (AG), and 215 to 216 (NS) each bind 1-deoxy-D-xylulose 5-phosphate.

The protein belongs to the ThiG family. In terms of assembly, homotetramer. Forms heterodimers with either ThiH or ThiS.

The protein localises to the cytoplasm. It carries out the reaction [ThiS sulfur-carrier protein]-C-terminal-Gly-aminoethanethioate + 2-iminoacetate + 1-deoxy-D-xylulose 5-phosphate = [ThiS sulfur-carrier protein]-C-terminal Gly-Gly + 2-[(2R,5Z)-2-carboxy-4-methylthiazol-5(2H)-ylidene]ethyl phosphate + 2 H2O + H(+). It functions in the pathway cofactor biosynthesis; thiamine diphosphate biosynthesis. In terms of biological role, catalyzes the rearrangement of 1-deoxy-D-xylulose 5-phosphate (DXP) to produce the thiazole phosphate moiety of thiamine. Sulfur is provided by the thiocarboxylate moiety of the carrier protein ThiS. In vitro, sulfur can be provided by H(2)S. This chain is Thiazole synthase, found in Stutzerimonas stutzeri (strain A1501) (Pseudomonas stutzeri).